Reading from the N-terminus, the 671-residue chain is Zinc finger protein 568 (671 aa).

The tract at residues 1-31 (MERLSQMAGRRAWCAEDSVPRQEEEDRTRPS) is disordered. The segment covering 18 to 29 (SVPRQEEEDRTR) has biased composition (basic and acidic residues). KRAB domains follow at residues 34–105 (VTFK…RRSP) and 124–195 (LRFE…IWHP). The segment at 214 to 366 (EKMAKKHTCP…QGSERPHKCK (153 aa)) is disordered. 3 stretches are compositionally biased toward basic and acidic residues: residues 226 to 251 (EDSK…EGHL), 296 to 312 (IERE…EHAQ), and 329 to 341 (RPQE…ERKK). C2H2-type zinc fingers lie at residues 363–385 (HKCK…QKLH), 391–413 (YKCQ…HRVH), 419–441 (FECK…QRIH), 447–469 (HKCK…LLTH), 475–497 (FECK…QMSH), 503–525 (HKCK…QSVH), 531–553 (YKCK…QRAH), 559–581 (YKCK…QKVH), 587–609 (HKCK…ERSH), 615–637 (YECK…QKIH), and 643–665 (YKCQ…QRIH).

It belongs to the krueppel C2H2-type zinc-finger protein family. In terms of assembly, interacts with TRIM28. Little or no expression detected in most adult tissues (brain, liver, kidney, spleen, testis, ovary). In the hippocampus, detected in neural stem cells within the subventricular zone and subgranular zone.

The protein localises to the nucleus. Its function is as follows. Has transcriptional repression activity, partially through the recruitment of the corepressor TRIM28 but also has repression activity independently of this interaction. Essential during embryonic development, where it acts as direct repressor of IGF2-P0, placental-specific transcript of IGF2, in early development and regulates convergent extension movements required for axis elongation and tissue morphogenesis in all germ layers. Also important for normal morphogenesis of extraembryonic tissues including the yolk sac, extraembryonic mesoderm and placenta. May enhance proliferation or maintenance of neural stem cells. In Mus musculus (Mouse), this protein is Zinc finger protein 568.